The chain runs to 58 residues: Large ribosomal subunit protein uL30 (58 aa).

This sequence belongs to the universal ribosomal protein uL30 family. As to quaternary structure, part of the 50S ribosomal subunit.

The chain is Large ribosomal subunit protein uL30 from Pseudomonas aeruginosa (strain LESB58).